The primary structure comprises 379 residues: MPAAFPPDSVGLVTPQTAHFSEPLALACGRSLADYDLIYETYGTLNAQASNAVLICHALSGHHHAAGYHSVDDRKPGWWDSCIGPGKPIDTNKFFVVSLNNLGGCNGSTGPSSLNPETGKPFGADFPVLTVEDWVHSQARLADLLGIGQWAAVIGGSLGGMQALQWTITYPDRVRHCLAIASAPKLSAQNIAFNEVARQAILTDPEFHGGSFQEHGVIPKRGLMLARMVGHITYLSDDSMGEKFGRGLKSEKLNYDFHSVEFQVESYLRYQGEEFSGRFDANTYLLMTKALDYFDPAANFNDNLAKTFEGAKAKFCVMSFTTDWRFSPARSRELVDALMAARKDVSYLEIDAPQGHDAFLIPIPRYLQAFGNYMNRITL.

Residues 51 to 360 (NAVLICHALS…DAPQGHDAFL (310 aa)) enclose the AB hydrolase-1 domain. Serine 157 serves as the catalytic Nucleophile. Arginine 227 lines the substrate pocket. Catalysis depends on residues aspartate 323 and histidine 356. Aspartate 357 serves as a coordination point for substrate.

Belongs to the AB hydrolase superfamily. MetX family. Homodimer.

It is found in the cytoplasm. It carries out the reaction L-homoserine + succinyl-CoA = O-succinyl-L-homoserine + CoA. Its pathway is amino-acid biosynthesis; L-methionine biosynthesis via de novo pathway; O-succinyl-L-homoserine from L-homoserine: step 1/1. In terms of biological role, transfers a succinyl group from succinyl-CoA to L-homoserine, forming succinyl-L-homoserine. In Pseudomonas fluorescens (strain Pf0-1), this protein is Homoserine O-succinyltransferase.